Consider the following 157-residue polypeptide: Aspartate carbamoyltransferase regulatory chain (157 aa).

Zn(2+) is bound by residues cysteine 108, cysteine 113, cysteine 138, and cysteine 141.

It belongs to the PyrI family. As to quaternary structure, contains catalytic and regulatory chains. Zn(2+) serves as cofactor.

Its function is as follows. Involved in allosteric regulation of aspartate carbamoyltransferase. The protein is Aspartate carbamoyltransferase regulatory chain of Korarchaeum cryptofilum (strain OPF8).